The following is a 276-amino-acid chain: Probable ribose-5-phosphate isomerase 3, chloroplastic (276 aa).

Residues 1–39 (MASLSFVSSSHLTLRTPSIALRSTGSSPRTSVSFSVKAQ) constitute a chloroplast transit peptide. At Ser-40 the chain carries N-acetylserine. Ser-108 carries the phosphoserine modification.

It belongs to the ribose 5-phosphate isomerase family. Post-translationally, phosphorylated by SRK2C.

It is found in the plastid. Its subcellular location is the chloroplast. The catalysed reaction is aldehydo-D-ribose 5-phosphate = D-ribulose 5-phosphate. Its pathway is carbohydrate degradation; pentose phosphate pathway; D-ribose 5-phosphate from D-ribulose 5-phosphate (non-oxidative stage): step 1/1. Catalyzes the reversible conversion of ribose-5-phosphate to ribulose 5-phosphate. The chain is Probable ribose-5-phosphate isomerase 3, chloroplastic (RPI3) from Arabidopsis thaliana (Mouse-ear cress).